The chain runs to 389 residues: Choline/ethanolaminephosphotransferase 1 (389 aa).

Residues 40-60 (VFPLWMPPNMITLMGFMFLVT) form a helical membrane-spanning segment. Residue N48 coordinates CDP-choline. D95 and D98 together coordinate Mg(2+). R103 serves as a coordination point for CDP-choline. Mg(2+) is bound at residue D116. H117 functions as the Proton acceptor in the catalytic mechanism. D120 serves as a coordination point for Mg(2+). 7 helical membrane passes run 141-161 (TFWFWVISAIPFYGATWEHYF), 176-196 (GLALIFVSHFFTAIVGAEWWA), 221-241 (VLYMMIAFAVIPTVAFNVTNV), 252-272 (MVLALAMLYPFVVLLGGVLIW), 280-300 (LIATYPHLVVLGTGLAFGFLV), 322-344 (SLLYLPFALANALTARLNAGVPL), and 350-370 (VLLGYCIFTVSLYLHFATSVI).

This sequence belongs to the CDP-alcohol phosphatidyltransferase class-I family. Requires Mg(2+) as cofactor. It depends on Mn(2+) as a cofactor.

The protein localises to the membrane. The catalysed reaction is CDP-ethanolamine + a 1,2-diacyl-sn-glycerol = a 1,2-diacyl-sn-glycero-3-phosphoethanolamine + CMP + H(+). The enzyme catalyses CDP-choline + a 1,2-diacyl-sn-glycerol = a 1,2-diacyl-sn-glycero-3-phosphocholine + CMP + H(+). Its pathway is phospholipid metabolism; phosphatidylethanolamine biosynthesis; phosphatidylethanolamine from ethanolamine: step 3/3. It functions in the pathway phospholipid metabolism; phosphatidylcholine biosynthesis; phosphatidylcholine from phosphocholine: step 2/2. Its function is as follows. Catalyzes both phosphatidylcholine and phosphatidylethanolamine biosynthesis from CDP-choline and CDP-ethanolamine, respectively. Has a higher cholinephosphotransferase activity than ethanolaminephosphotransferase activity. The chain is Choline/ethanolaminephosphotransferase 1 (AAPT1) from Arabidopsis thaliana (Mouse-ear cress).